Here is a 431-residue protein sequence, read N- to C-terminus: Light-independent protochlorophyllide reductase subunit N (431 aa).

Residues Cys-29, Cys-54, and Cys-114 each coordinate [4Fe-4S] cluster.

It belongs to the BchN/ChlN family. In terms of assembly, protochlorophyllide reductase is composed of three subunits; ChlL, ChlN and ChlB. Forms a heterotetramer of two ChlB and two ChlN subunits. It depends on [4Fe-4S] cluster as a cofactor.

It is found in the plastid. The protein localises to the chloroplast. It carries out the reaction chlorophyllide a + oxidized 2[4Fe-4S]-[ferredoxin] + 2 ADP + 2 phosphate = protochlorophyllide a + reduced 2[4Fe-4S]-[ferredoxin] + 2 ATP + 2 H2O. Its pathway is porphyrin-containing compound metabolism; chlorophyll biosynthesis (light-independent). In terms of biological role, component of the dark-operative protochlorophyllide reductase (DPOR) that uses Mg-ATP and reduced ferredoxin to reduce ring D of protochlorophyllide (Pchlide) to form chlorophyllide a (Chlide). This reaction is light-independent. The NB-protein (ChlN-ChlB) is the catalytic component of the complex. In Nephroselmis olivacea (Green alga), this protein is Light-independent protochlorophyllide reductase subunit N.